The primary structure comprises 280 residues: Polyamine aminopropyltransferase 2 (280 aa).

The 236-residue stretch at 2–237 folds into the PABS domain; it reads ELWLDEALEL…GIIGFTYCSK (236 aa). Glutamine 33 contributes to the S-methyl-5'-thioadenosine binding site. 2 residues coordinate spermidine: histidine 64 and aspartate 88. S-methyl-5'-thioadenosine is bound by residues glutamate 108 and 139 to 140; that span reads DG. Aspartate 157 acts as the Proton acceptor in catalysis. 157 to 160 provides a ligand contact to spermidine; the sequence is DSSD. Proline 164 is a binding site for S-methyl-5'-thioadenosine.

This sequence belongs to the spermidine/spermine synthase family. Homodimer or homotetramer.

It is found in the cytoplasm. The catalysed reaction is S-adenosyl 3-(methylsulfanyl)propylamine + putrescine = S-methyl-5'-thioadenosine + spermidine + H(+). It functions in the pathway amine and polyamine biosynthesis; spermidine biosynthesis; spermidine from putrescine: step 1/1. Functionally, catalyzes the irreversible transfer of a propylamine group from the amino donor S-adenosylmethioninamine (decarboxy-AdoMet) to putrescine (1,4-diaminobutane) to yield spermidine. The sequence is that of Polyamine aminopropyltransferase 2 from Leptospira interrogans serogroup Icterohaemorrhagiae serovar Lai (strain 56601).